A 403-amino-acid chain; its full sequence is Phosphopentomutase 2 (403 aa).

Aspartate 13, aspartate 298, histidine 303, aspartate 339, histidine 340, and histidine 351 together coordinate Mn(2+).

It belongs to the phosphopentomutase family. The cofactor is Mn(2+).

The protein resides in the cytoplasm. The enzyme catalyses 2-deoxy-alpha-D-ribose 1-phosphate = 2-deoxy-D-ribose 5-phosphate. It catalyses the reaction alpha-D-ribose 1-phosphate = D-ribose 5-phosphate. It participates in carbohydrate degradation; 2-deoxy-D-ribose 1-phosphate degradation; D-glyceraldehyde 3-phosphate and acetaldehyde from 2-deoxy-alpha-D-ribose 1-phosphate: step 1/2. Its function is as follows. Isomerase that catalyzes the conversion of deoxy-ribose 1-phosphate (dRib-1-P) and ribose 1-phosphate (Rib-1-P) to deoxy-ribose 5-phosphate (dRib-5-P) and ribose 5-phosphate (Rib-5-P), respectively. The chain is Phosphopentomutase 2 from Streptococcus agalactiae serotype Ia (strain ATCC 27591 / A909 / CDC SS700).